The sequence spans 576 residues: Acyl-CoA ligase sidI (576 aa).

Residues 3-11 carry the PTS2-type peroxisomal targeting signal motif; sequence PVTTKTIRP. Asp-439, Arg-454, and Lys-553 together coordinate ATP.

This sequence belongs to the ATP-dependent AMP-binding enzyme family.

It localises to the peroxisome. The protein operates within siderophore biosynthesis. Functionally, acyl-CoA ligase; part of the gene cluster that mediates the biosynthesis of at least 11 siderophores, including beauverichelin A, dimerumic acid (DA), Na-dimethyl coprogen (NADC), eleutherazine B, ferricrocin (FC), fusarinine A, fusarinine C (FsC), metachelin A, mevalonolactone, rhodotorulic acid (RA) and tenellin. This cocktail of siderophores for iron metabolism is essential for virulence, and more specifically for the fungal virulence in penetrating through the host cuticle. Siderophore synthesis is also involved in conidial germination under iron-deficient conditions. For biosynthesis of fusarinine C, the transacylase SIDF transfers anhydromevalonyl to N(5)-hydroxyornithine. The required anhydromevalonyl-CoA moiety is derived from mevalonate by CoA ligation and dehydration catalyzed by SIDI and sidH respectively. The chain is Acyl-CoA ligase sidI from Beauveria bassiana (strain ARSEF 2860) (White muscardine disease fungus).